Reading from the N-terminus, the 382-residue chain is Serine/arginine-rich splicing factor SR45a (382 aa).

Low complexity-rich tracts occupy residues 30-45 (PMSY…SLSP), 54-68 (VSRS…SVSS), 177-195 (PSYS…SRSY), and 202-219 (SYSP…YSPF). Disordered stretches follow at residues 30–76 (PMSY…PGNS) and 150–382 (KARR…SVSP). The span at 288 to 316 (RARDRSCSPYYRGRDRSYSPHYQGRDRSY) shows a compositional bias: basic and acidic residues. A compositionally biased stretch (low complexity) spans 329 to 343 (VSGSVSPGGRSMSRS). Basic residues predominate over residues 345–361 (SPRKGRKESRSKSRRHD). Over residues 364–382 (SSMCHSRSARSSTSRSVSP) the composition is skewed to low complexity.

This sequence belongs to the splicing factor SR family. SR45 subfamily. In terms of assembly, component of the spliceosome. Homodimer. Interacts with PRP38, SCL28, SR45, RNU1 and U2AF35B. Post-translationally, phosphorylated. In terms of tissue distribution, expressed in leaves, stems and roots.

It localises to the nucleus speckle. In terms of biological role, probable splicing factor involved in constitutive and/or alternative splicing events. May bridge the 5' and 3' components of the spliceosome. The chain is Serine/arginine-rich splicing factor SR45a (SR45A) from Arabidopsis thaliana (Mouse-ear cress).